The sequence spans 870 residues: UvrABC system protein B (870 aa).

In terms of domain architecture, Helicase ATP-binding spans 20 to 410 (EGVDNNDRTQ…VFAEQVIRPT (391 aa)). 33 to 40 (GVTGSGKT) is an ATP binding site. Positions 86–109 (YYDYYQPEAYVPRTDTFIEKESSI) match the Beta-hairpin motif. One can recognise a Helicase C-terminal domain in the interval 425–591 (QVDDVVGEIR…SVKSRISDIL (167 aa)). Residues 620–655 (KAHLDAMEKQMRDAAANLDFEKAARIRDEIKRLREM) enclose the UVR domain. Disordered stretches follow at residues 671–698 (ESPVSGREKGKHNKGVAKHRTAEEQERF) and 741–870 (AKPS…RPGK). The segment covering 679 to 689 (KGKHNKGVAKH) has biased composition (basic residues). Basic and acidic residues-rich tracts occupy residues 793-808 (NSLDEMTVRRTEKPVE) and 827-836 (TDVKDRDDSA). The span at 858–870 (EKRRPGKTGRPGK) shows a compositional bias: basic residues.

This sequence belongs to the UvrB family. Forms a heterotetramer with UvrA during the search for lesions. Interacts with UvrC in an incision complex.

The protein resides in the cytoplasm. The UvrABC repair system catalyzes the recognition and processing of DNA lesions. A damage recognition complex composed of 2 UvrA and 2 UvrB subunits scans DNA for abnormalities. Upon binding of the UvrA(2)B(2) complex to a putative damaged site, the DNA wraps around one UvrB monomer. DNA wrap is dependent on ATP binding by UvrB and probably causes local melting of the DNA helix, facilitating insertion of UvrB beta-hairpin between the DNA strands. Then UvrB probes one DNA strand for the presence of a lesion. If a lesion is found the UvrA subunits dissociate and the UvrB-DNA preincision complex is formed. This complex is subsequently bound by UvrC and the second UvrB is released. If no lesion is found, the DNA wraps around the other UvrB subunit that will check the other stand for damage. This Mesorhizobium japonicum (strain LMG 29417 / CECT 9101 / MAFF 303099) (Mesorhizobium loti (strain MAFF 303099)) protein is UvrABC system protein B.